We begin with the raw amino-acid sequence, 642 residues long: Threonine--tRNA ligase (642 aa).

The TGS domain occupies 1–61 (MPVITLPDGS…ENDAQLSIIT (61 aa)). Residues 243 to 534 (DHRKIGKQLD…LTEEFAGFFP (292 aa)) form a catalytic region. Lys-286 is modified (N6-acetyllysine). Zn(2+) is bound by residues Cys-334, His-385, and His-511.

Belongs to the class-II aminoacyl-tRNA synthetase family. As to quaternary structure, homodimer. Requires Zn(2+) as cofactor.

It is found in the cytoplasm. It catalyses the reaction tRNA(Thr) + L-threonine + ATP = L-threonyl-tRNA(Thr) + AMP + diphosphate + H(+). Its function is as follows. Catalyzes the attachment of threonine to tRNA(Thr) in a two-step reaction: L-threonine is first activated by ATP to form Thr-AMP and then transferred to the acceptor end of tRNA(Thr). Also edits incorrectly charged L-seryl-tRNA(Thr). This Escherichia coli O9:H4 (strain HS) protein is Threonine--tRNA ligase.